Consider the following 229-residue polypeptide: UPF0441 protein YE3666 (229 aa).

2 disordered regions span residues 101 to 125 (PAQA…QQSG) and 190 to 229 (KPAV…SMGG). 2 stretches are compositionally biased toward low complexity: residues 109–120 (TSSSSSETTAAA) and 214–229 (RSAA…SMGG).

Belongs to the UPF0441 family.

This is UPF0441 protein YE3666 from Yersinia enterocolitica serotype O:8 / biotype 1B (strain NCTC 13174 / 8081).